A 284-amino-acid chain; its full sequence is 4-diphosphocytidyl-2-C-methyl-D-erythritol kinase (284 aa).

Residue K17 is part of the active site. Residue P100–S110 participates in ATP binding. D142 is a catalytic residue.

It belongs to the GHMP kinase family. IspE subfamily.

It carries out the reaction 4-CDP-2-C-methyl-D-erythritol + ATP = 4-CDP-2-C-methyl-D-erythritol 2-phosphate + ADP + H(+). It participates in isoprenoid biosynthesis; isopentenyl diphosphate biosynthesis via DXP pathway; isopentenyl diphosphate from 1-deoxy-D-xylulose 5-phosphate: step 3/6. In terms of biological role, catalyzes the phosphorylation of the position 2 hydroxy group of 4-diphosphocytidyl-2C-methyl-D-erythritol. This chain is 4-diphosphocytidyl-2-C-methyl-D-erythritol kinase, found in Aromatoleum aromaticum (strain DSM 19018 / LMG 30748 / EbN1) (Azoarcus sp. (strain EbN1)).